The following is a 171-amino-acid chain: MNKANSFNKEELIACGHGKLFGPNSPRLPVDNMLMIDRIVTINDNGGEFGKGEIVAELDINPELWFFDCHFISDPVMPGCLGLDAMWQLVGFYLGWEGAEGKGRALGVGEVKFTGQVLPGAKKVTYKLNIKRTIHRKLVMGIADAILEVDGRQIYSATDLKVGVFSDTSTF.

His70 is a catalytic residue.

Belongs to the thioester dehydratase family. FabA subfamily. In terms of assembly, homodimer.

It is found in the cytoplasm. The catalysed reaction is a (3R)-hydroxyacyl-[ACP] = a (2E)-enoyl-[ACP] + H2O. The enzyme catalyses (3R)-hydroxydecanoyl-[ACP] = (2E)-decenoyl-[ACP] + H2O. It carries out the reaction (2E)-decenoyl-[ACP] = (3Z)-decenoyl-[ACP]. It participates in lipid metabolism; fatty acid biosynthesis. Necessary for the introduction of cis unsaturation into fatty acids. Catalyzes the dehydration of (3R)-3-hydroxydecanoyl-ACP to E-(2)-decenoyl-ACP and then its isomerization to Z-(3)-decenoyl-ACP. Can catalyze the dehydratase reaction for beta-hydroxyacyl-ACPs with saturated chain lengths up to 16:0, being most active on intermediate chain length. The sequence is that of 3-hydroxydecanoyl-[acyl-carrier-protein] dehydratase from Shewanella putrefaciens (strain CN-32 / ATCC BAA-453).